The following is a 182-amino-acid chain: UPF0397 protein SPP_0507 (182 aa).

The next 5 helical transmembrane spans lie at 10-30, 46-66, 73-93, 109-129, and 148-168; these read VVAV…NIPT, LLSI…GHAI, YGLW…VGLF, ILIF…VLAP, and IVAG…LLLA.

It belongs to the UPF0397 family.

Its subcellular location is the cell membrane. This is UPF0397 protein SPP_0507 from Streptococcus pneumoniae (strain P1031).